Consider the following 226-residue polypeptide: Protein DVU_0532 (226 aa).

The next 6 membrane-spanning stretches (helical) occupy residues 1 to 23 (MYAFLTGPMLWASLLVFFGGLLA), 46 to 57 (AIGLQGAVQSAL), 73 to 99 (FFTVAFFLFHIGAVLVPLFLAGHNVIL), 112 to 131 (MGVADTLTVLAIIGLVMIAL), 141 to 164 (ILTTGYDWFILAVSAAPFVTGFLA), and 194 to 222 (LSHIVLFFMSRGQLGMDYAIKRGGATRGP).

Heme b is required as a cofactor.

It localises to the cell membrane. Functionally, HMWC (high-molecular-weight cytochrome c), ORF2, ORF3, ORF4, ORF5 and ORF6 in the HMC operon form a transmembrane protein complex that allows electron flow from the periplasmic hydrogenase to the cytoplasmic enzymes that catalyze reduction of sulfates. The polypeptide is Protein DVU_0532 (Nitratidesulfovibrio vulgaris (strain ATCC 29579 / DSM 644 / CCUG 34227 / NCIMB 8303 / VKM B-1760 / Hildenborough) (Desulfovibrio vulgaris)).